The chain runs to 47 residues: uncharacterized protein (47 aa).

Residues 22–47 form a disordered region; it reads VGPRTKRANQASPPVGRHSSRLMCPG.

This is an uncharacterized protein from Saccharomyces cerevisiae (strain ATCC 204508 / S288c) (Baker's yeast).